The primary structure comprises 158 residues: NADH-quinone oxidoreductase subunit B 2 (158 aa).

C37, C38, C102, and C132 together coordinate [4Fe-4S] cluster.

This sequence belongs to the complex I 20 kDa subunit family. In terms of assembly, NDH-1 is composed of 14 different subunits. Subunits NuoB, C, D, E, F, and G constitute the peripheral sector of the complex. The cofactor is [4Fe-4S] cluster.

The protein resides in the cell inner membrane. The enzyme catalyses a quinone + NADH + 5 H(+)(in) = a quinol + NAD(+) + 4 H(+)(out). NDH-1 shuttles electrons from NADH, via FMN and iron-sulfur (Fe-S) centers, to quinones in the respiratory chain. Couples the redox reaction to proton translocation (for every two electrons transferred, four hydrogen ions are translocated across the cytoplasmic membrane), and thus conserves the redox energy in a proton gradient. The sequence is that of NADH-quinone oxidoreductase subunit B 2 from Nitrosospira multiformis (strain ATCC 25196 / NCIMB 11849 / C 71).